We begin with the raw amino-acid sequence, 214 residues long: uncharacterized protein (214 aa).

CBS domains follow at residues 7 to 65 (MDKN…KKPI) and 69 to 129 (MRPV…EIPV).

This is an uncharacterized protein from Methanocaldococcus jannaschii (strain ATCC 43067 / DSM 2661 / JAL-1 / JCM 10045 / NBRC 100440) (Methanococcus jannaschii).